Reading from the N-terminus, the 266-residue chain is Serine/arginine-rich splicing factor 12 (266 aa).

The interval 42–266 is disordered; it reads ARPRRPRAPR…SRSYHHKNSW (225 aa). A compositionally biased stretch (basic residues) spans 43–62; that stretch reads RPRRPRAPRPRLRLRGRPGR. Basic and acidic residues predominate over residues 102–114; sequence KSKERHLCSPSDH. The span at 115–127 shows a compositional bias: basic residues; the sequence is RRSRSPSQRRSRS. Residues 133–144 are compositionally biased toward basic and acidic residues; sequence GRDRRHSDSLKE. Residues 151–166 show a composition bias toward low complexity; sequence SYSQSKSRSKSLPRQS. Positions 183–194 are enriched in basic residues; the sequence is GRSRSKSLPKRS. Composition is skewed to polar residues over residues 202-212 and 235-244; these read SRSPQKQTGSG and AYTSSGSKTQ. A compositionally biased stretch (basic residues) spans 245–266; the sequence is TTKHSHLRSHSRSRSYHHKNSW.

The protein belongs to the splicing factor SR family.

It is found in the nucleus. Functionally, splicing factor that seems to antagonize SR proteins in pre-mRNA splicing regulation. In Mus musculus (Mouse), this protein is Serine/arginine-rich splicing factor 12 (Srsf12).